The sequence spans 1872 residues: Plexin-A3 (1872 aa).

Residues 1–19 (MPTVCLLPLLFFTIGGCLG) form the signal peptide. In terms of domain architecture, Sema spans 20–489 (SSRPFRTFVV…SEKQVSQLPV (470 aa)). Over 20 to 1220 (SSRPFRTFVV…ITADRALTLP (1201 aa)) the chain is Extracellular. N60 carries N-linked (GlcNAc...) asparagine glycosylation. 9 cysteine pairs are disulfide-bonded: C78-C87, C113-C121, C267-C388, C283-C339, C357-C376, C492-C509, C498-C540, C501-C518, and C512-C524. N-linked (GlcNAc...) asparagine glycosylation is present at N549. C575 and C595 form a disulfide bridge. IPT/TIG domains follow at residues 841–934 (PRIT…YSFV), 936–1021 (PTFD…YTYT), 1024–1123 (PTVT…FTYY), and 1126–1212 (PSFE…LHIT). An N-linked (GlcNAc...) asparagine glycan is attached at N1163. Residues 1221–1241 (AMVGLAAGGGLLLLAITVVLV) traverse the membrane as a helical segment. The stretch at 1240 to 1294 (LVAYKRKTQDADRTLKRLQLQMDNLESRVALECKEAFAELQTDINELTNHMDGVQ) forms a coiled coil. Over 1242 to 1872 (AYKRKTQDAD…QIITLVSSSS (631 aa)) the chain is Cytoplasmic. Phosphoserine is present on S1597.

It belongs to the plexin family. In terms of tissue distribution, detected in embryonic hindbrain, spinal cord, dorsal root ganglion, trigeminal ganglion and superior cervical ganglion. In newborns, detected throughout all layers of the hippocampus.

It is found in the cell membrane. Functionally, coreceptor for SEMA3A and SEMA3F. Necessary for signaling by class 3 semaphorins and subsequent remodeling of the cytoskeleton. Plays a role in axon guidance in the developing nervous system. Regulates the migration of sympathetic neurons, but not of neural crest precursors. Required for normal dendrite spine morphology in pyramidal neurons. May play a role in regulating semaphorin-mediated programmed cell death in the developing nervous system. Class 3 semaphorins bind to a complex composed of a neuropilin and a plexin. The plexin modulates the affinity of the complex for specific semaphorins, and its cytoplasmic domain is required for the activation of down-stream signaling events in the cytoplasm. This Mus musculus (Mouse) protein is Plexin-A3 (Plxna3).